We begin with the raw amino-acid sequence, 121 residues long: Aspartate 1-decarboxylase (121 aa).

The active-site Schiff-base intermediate with substrate; via pyruvic acid is the Ser25. Ser25 carries the pyruvic acid (Ser) modification. Residue Thr57 participates in substrate binding. The active-site Proton donor is the Tyr58. Substrate is bound at residue Gly73–Ala75.

Belongs to the PanD family. As to quaternary structure, heterooctamer of four alpha and four beta subunits. It depends on pyruvate as a cofactor. Post-translationally, is synthesized initially as an inactive proenzyme, which is activated by self-cleavage at a specific serine bond to produce a beta-subunit with a hydroxyl group at its C-terminus and an alpha-subunit with a pyruvoyl group at its N-terminus.

The protein resides in the cytoplasm. It catalyses the reaction L-aspartate + H(+) = beta-alanine + CO2. It participates in cofactor biosynthesis; (R)-pantothenate biosynthesis; beta-alanine from L-aspartate: step 1/1. Catalyzes the pyruvoyl-dependent decarboxylation of aspartate to produce beta-alanine. The chain is Aspartate 1-decarboxylase from Maricaulis maris (strain MCS10) (Caulobacter maris).